Consider the following 492-residue polypeptide: Osmoregulated proline transporter OpuE (492 aa).

The next 13 membrane-spanning stretches (helical) occupy residues 3–23 (IEII…GWYA), 40–60 (LGPF…WMLM), 62–82 (VPGA…GLTI), 125–145 (IVSA…GMVS), 161–181 (GLFL…FLAV), 190–210 (AIMF…VGGV), 224–244 (LLDI…AWGL), 271–291 (IGMS…LIGV), 314–334 (ILFH…AIMS), 365–385 (LVMI…LLSL), 394–414 (LVGY…LLSL), 424–444 (ALAA…TGLA), and 449–469 (VYEI…VSMI).

The protein belongs to the sodium:solute symporter (SSF) (TC 2.A.21) family.

It is found in the cell membrane. It carries out the reaction L-proline(in) + Na(+)(in) = L-proline(out) + Na(+)(out). In terms of biological role, catalyzes the uptake of extracellular proline under high-osmolarity growth conditions. Essential for the use of proline present in the environment as an osmoprotectant. This Bacillus subtilis (strain 168) protein is Osmoregulated proline transporter OpuE.